Here is a 362-residue protein sequence, read N- to C-terminus: Very-long-chain (3R)-3-hydroxyacyl-CoA dehydratase 3 (362 aa).

Residue Met-1 is modified to N-acetylmethionine. Residues 1–149 (METQVLTPHV…ETLTNLKKGY (149 aa)) are Cytoplasmic-facing. The CS domain occupies 5–94 (VLTPHVYWAQ…KGSHWWERLT (90 aa)). Thr-7 carries the post-translational modification Phosphothreonine. A coiled-coil region spans residues 111–138 (LDESDAEMELRAKEEERLNKLRLEREGS). Ser-114 is subject to Phosphoserine. Residues 150 to 170 (LFMYNLVQLLGFSWIFVNLTV) traverse the membrane as a helical segment. Topologically, residues 171 to 189 (RFFILGKESFYDTFHNVAD) are lumenal. Residues 190-210 (MMYFCQMLALVETLNAAIGVT) traverse the membrane as a helical segment. The Cytoplasmic segment spans residues 211 to 212 (ST). Residues 213–233 (PVLPALIQFLGRNFILFLVFG) form a helical membrane-spanning segment. The Lumenal segment spans residues 234 to 242 (TMEEMQNKA). Residues 243–263 (VVFFVFYSWSAIEIFRYPFYM) form a helical membrane-spanning segment. The Cytoplasmic segment spans residues 264–280 (LSCIDMDWKVLTWLRYT). The chain crosses the membrane as a helical span at residues 281-301 (MWIPLYPLGCLSEAVAVIQSI). Active-site residues include Tyr-286 and Glu-293. At 302 to 322 (PVFNESGRFSFTLPYPVKMKV) the chain is on the lumenal side. The chain crosses the membrane as a helical span at residues 323-343 (RFSFFLQVYLVMLFLGLYINF). Residues 344–362 (RHLYKQRRRRYGQKKKKLH) are Cytoplasmic-facing.

This sequence belongs to the very long-chain fatty acids dehydratase HACD family. As to quaternary structure, may interact with enzymes of the ELO family (including ELOVL1); with those enzymes that mediate condensation, the first of the four steps of the reaction cycle responsible for fatty acids elongation, may be part of a larger fatty acids elongase complex. Interacts with RAC1. Associates with internalized insulin receptor/INSR complexes on Golgi/endosomal membranes; HACD3/PTPLAD1 together with ATIC and PRKAA2/AMPK2 is proposed to be part of a signaling network regulating INSR autophosphorylation and endocytosis.

Its subcellular location is the endoplasmic reticulum membrane. The enzyme catalyses a very-long-chain (3R)-3-hydroxyacyl-CoA = a very-long-chain (2E)-enoyl-CoA + H2O. It carries out the reaction (3R)-hydroxyhexadecanoyl-CoA = (2E)-hexadecenoyl-CoA + H2O. Its pathway is lipid metabolism; fatty acid biosynthesis. Catalyzes the third of the four reactions of the long-chain fatty acids elongation cycle. This endoplasmic reticulum-bound enzymatic process, allows the addition of two carbons to the chain of long- and very long-chain fatty acids/VLCFAs per cycle. This enzyme catalyzes the dehydration of the 3-hydroxyacyl-CoA intermediate into trans-2,3-enoyl-CoA, within each cycle of fatty acid elongation. Thereby, it participates in the production of VLCFAs of different chain lengths that are involved in multiple biological processes as precursors of membrane lipids and lipid mediators. Involved in Rac1-signaling pathways leading to the modulation of gene expression. Promotes insulin receptor/INSR autophosphorylation and is involved in INSR internalization. The polypeptide is Very-long-chain (3R)-3-hydroxyacyl-CoA dehydratase 3 (Mus musculus (Mouse)).